Consider the following 258-residue polypeptide: MPKTLTEKLNAIKAAGKGIFVPYIMAGDHEKGLDGLAETIHFLEDLGVSAIEVGIPFSDPVADGPVIEEAGLRSLAHGTSTQALVETLKTIETEIPLVIMTYFNPLFQYGVENFVKDLADTAVKGLIIPDLPHEHANFVEPFLANTDIALIPLVSLTTGIERQKELIEGAEGFIYAVAINGVTGKSGNYRADLDKHLAQLHQVADIPVLTGFGVSSQADLERFNAVSDGVIVGSKIVKALHQGEPIQDFIRQAVAYQK.

Residues E52 and D63 each act as proton acceptor in the active site.

It belongs to the TrpA family. As to quaternary structure, tetramer of two alpha and two beta chains.

The catalysed reaction is (1S,2R)-1-C-(indol-3-yl)glycerol 3-phosphate + L-serine = D-glyceraldehyde 3-phosphate + L-tryptophan + H2O. It participates in amino-acid biosynthesis; L-tryptophan biosynthesis; L-tryptophan from chorismate: step 5/5. In terms of biological role, the alpha subunit is responsible for the aldol cleavage of indoleglycerol phosphate to indole and glyceraldehyde 3-phosphate. In Streptococcus pneumoniae serotype 4 (strain ATCC BAA-334 / TIGR4), this protein is Tryptophan synthase alpha chain.